The sequence spans 328 residues: Small ribosomal subunit protein bS1A (328 aa).

S1 motif domains lie at 31–100 (GDIV…LSIR), 118–182 (DATV…LSHR), and 196–264 (AQVV…LSTK). A disordered region spans residues 298-328 (EAQGIPYEPPTSVDDTDDEEDESLAVSAVDE). The span at 311–328 (DDTDDEEDESLAVSAVDE) shows a compositional bias: acidic residues.

Belongs to the bacterial ribosomal protein bS1 family.

Its function is as follows. Binds mRNA. This chain is Small ribosomal subunit protein bS1A (rps1A), found in Synechocystis sp. (strain ATCC 27184 / PCC 6803 / Kazusa).